Here is a 414-residue protein sequence, read N- to C-terminus: WW domain-containing oxidoreductase (414 aa).

Residues 1–24 (MAALRYAGLDDTDSEDELPPGWEE) form a disordered region. Residue threonine 12 is modified to Phosphothreonine. Serine 14 carries the phosphoserine modification. The region spanning 16–49 (DELPPGWEERTTKDGWVYYANHTEEKTQWEHPKT) is the WW 1 domain. At tyrosine 33 the chain carries Phosphotyrosine. Residues 50–55 (GKRKRV) carry the Nuclear localization signal motif. A WW 2 domain is found at 57 to 90 (GDLPYGWEQGTDENGQVFFVDHINKRTTYLDPRL). The segment at 125 to 414 (KVVVVTGANS…IQERLGSQSG (290 aa)) is interaction with MAPT. Position 131-137 (131-137 (GANSGIG)) interacts with NADP(+). The segment at 209–273 (CNAATFALPW…RFTDINDSLG (65 aa)) is mediates targeting to the mitochondria. Serine 260 contacts substrate. Tyrosine 287 carries the post-translational modification Phosphotyrosine; by TNK2. The active-site Proton acceptor is tyrosine 293.

It belongs to the short-chain dehydrogenases/reductases (SDR) family. In terms of assembly, interacts with TP53, p73/TP73 and MAPK8. Interacts with MAPT/TAU, RUNX2 and HYAL2. Forms a ternary complex with TP53 and MDM2. Interacts with ERBB4, LITAF and WBP1. Interacts with DVL1, DVL2 and DVL3. May interact with FAM189B and SCOTIN. Interacts with TNK2. Interacts with TMEM207. Interacts (via WW domain) with VOPP1. Post-translationally, phosphorylated upon genotoxic stress. Phosphorylation of Tyr-33 regulates interaction with TP53, TP73 and MAPK8. May also regulate proapoptotic activity. Phosphorylation by TNK2 is associated with polyubiquitination and degradation. Ubiquitinated when phosphorylated by TNK2, leading to its degradation.

It localises to the cytoplasm. It is found in the nucleus. Its subcellular location is the mitochondrion. The protein resides in the golgi apparatus. The protein localises to the lysosome. In terms of biological role, putative oxidoreductase. Acts as a tumor suppressor and plays a role in apoptosis. May function synergistically with p53/TP53 to control genotoxic stress-induced cell death. Plays a role in TGFB1 signaling and TGFB1-mediated cell death. May also play a role in tumor necrosis factor (TNF)-mediated cell death. Required for normal bone development. Inhibits Wnt signaling, probably by sequestering DVL2 in the cytoplasm. The protein is WW domain-containing oxidoreductase (WWOX) of Pongo abelii (Sumatran orangutan).